Here is a 151-residue protein sequence, read N- to C-terminus: S-ribosylhomocysteine lyase (151 aa).

Positions 54, 58, and 121 each coordinate Fe cation.

It belongs to the LuxS family. In terms of assembly, homodimer. Fe cation serves as cofactor.

It catalyses the reaction S-(5-deoxy-D-ribos-5-yl)-L-homocysteine = (S)-4,5-dihydroxypentane-2,3-dione + L-homocysteine. In terms of biological role, involved in the synthesis of autoinducer 2 (AI-2) which is secreted by bacteria and is used to communicate both the cell density and the metabolic potential of the environment. The regulation of gene expression in response to changes in cell density is called quorum sensing. Catalyzes the transformation of S-ribosylhomocysteine (RHC) to homocysteine (HC) and 4,5-dihydroxy-2,3-pentadione (DPD). The sequence is that of S-ribosylhomocysteine lyase from Clostridium botulinum (strain Alaska E43 / Type E3).